The sequence spans 955 residues: Isoleucine--tRNA ligase (955 aa).

The 'HIGH' region signature appears at 58–68; it reads IYANGDIHIGH. E552 serves as a coordination point for L-isoleucyl-5'-AMP. The 'KMSKS' region signature appears at 593 to 597; the sequence is KMSKS. K596 lines the ATP pocket. 4 residues coordinate Zn(2+): C918, C921, C938, and C941.

The protein belongs to the class-I aminoacyl-tRNA synthetase family. IleS type 1 subfamily. As to quaternary structure, monomer. The cofactor is Zn(2+).

Its subcellular location is the cytoplasm. It carries out the reaction tRNA(Ile) + L-isoleucine + ATP = L-isoleucyl-tRNA(Ile) + AMP + diphosphate. Functionally, catalyzes the attachment of isoleucine to tRNA(Ile). As IleRS can inadvertently accommodate and process structurally similar amino acids such as valine, to avoid such errors it has two additional distinct tRNA(Ile)-dependent editing activities. One activity is designated as 'pretransfer' editing and involves the hydrolysis of activated Val-AMP. The other activity is designated 'posttransfer' editing and involves deacylation of mischarged Val-tRNA(Ile). The sequence is that of Isoleucine--tRNA ligase from Vesicomyosocius okutanii subsp. Calyptogena okutanii (strain HA).